We begin with the raw amino-acid sequence, 205 residues long: Small ribosomal subunit protein uS4 (205 aa).

In terms of domain architecture, S4 RNA-binding spans 94 to 172 (SRLDSIVYRM…TTPDYVSFDV (79 aa)).

The protein belongs to the universal ribosomal protein uS4 family. In terms of assembly, part of the 30S ribosomal subunit. Contacts protein S5. The interaction surface between S4 and S5 is involved in control of translational fidelity.

In terms of biological role, one of the primary rRNA binding proteins, it binds directly to 16S rRNA where it nucleates assembly of the body of the 30S subunit. Its function is as follows. With S5 and S12 plays an important role in translational accuracy. The polypeptide is Small ribosomal subunit protein uS4 (Rickettsia bellii (strain OSU 85-389)).